A 254-amino-acid polypeptide reads, in one-letter code: MRKVFLAGNWKMHYTSVEAADVAKQIVDGVYNINNNVVVMVTPTFTSLCKVCRVTKGTNVLLGAQNMSYENSGARTSEIAPSMLLEFGVDYVILGHSECRTYLGENDEIINKKVLTGLKHPFKYLILCVGETLEEREKGKTLDVVLNQVRNGLASVYESDLQRIILAYEPVWAIGTGKTATKEEAQEVHKAIRLEIQSLYSKSAADNIIIQYGGSVNVDNVEGLMGENDIDGALIGGASLKADSFLKIINKISK.

9-11 (NWK) is a substrate binding site. The active-site Electrophile is the H96. Residue E169 is the Proton acceptor of the active site. Residues G175, S215, and 236-237 (GG) contribute to the substrate site.

The protein belongs to the triosephosphate isomerase family. As to quaternary structure, homodimer.

It localises to the cytoplasm. It catalyses the reaction D-glyceraldehyde 3-phosphate = dihydroxyacetone phosphate. It participates in carbohydrate biosynthesis; gluconeogenesis. The protein operates within carbohydrate degradation; glycolysis; D-glyceraldehyde 3-phosphate from glycerone phosphate: step 1/1. In terms of biological role, involved in the gluconeogenesis. Catalyzes stereospecifically the conversion of dihydroxyacetone phosphate (DHAP) to D-glyceraldehyde-3-phosphate (G3P). The polypeptide is Triosephosphate isomerase (Borrelia duttonii (strain Ly)).